A 55-amino-acid chain; its full sequence is Large ribosomal subunit protein bL33 (55 aa).

This sequence belongs to the bacterial ribosomal protein bL33 family.

The polypeptide is Large ribosomal subunit protein bL33 (Dehalococcoides mccartyi (strain ATCC BAA-2266 / KCTC 15142 / 195) (Dehalococcoides ethenogenes (strain 195))).